Reading from the N-terminus, the 101-residue chain is NAD(P)H-quinone oxidoreductase subunit 4L, chloroplastic (101 aa).

The next 3 membrane-spanning stretches (helical) occupy residues 2-22 (MFEHVLFLSVYLFSIGIYGLI), 32-52 (ICLELILNSINLNLVTFSDLF), and 61-81 (IFAIFVIALAAAEAAIGLSIL).

This sequence belongs to the complex I subunit 4L family. In terms of assembly, NDH is composed of at least 16 different subunits, 5 of which are encoded in the nucleus.

It is found in the plastid. It localises to the chloroplast thylakoid membrane. The catalysed reaction is a plastoquinone + NADH + (n+1) H(+)(in) = a plastoquinol + NAD(+) + n H(+)(out). The enzyme catalyses a plastoquinone + NADPH + (n+1) H(+)(in) = a plastoquinol + NADP(+) + n H(+)(out). Functionally, NDH shuttles electrons from NAD(P)H:plastoquinone, via FMN and iron-sulfur (Fe-S) centers, to quinones in the photosynthetic chain and possibly in a chloroplast respiratory chain. The immediate electron acceptor for the enzyme in this species is believed to be plastoquinone. Couples the redox reaction to proton translocation, and thus conserves the redox energy in a proton gradient. This chain is NAD(P)H-quinone oxidoreductase subunit 4L, chloroplastic, found in Agrostis stolonifera (Creeping bentgrass).